Consider the following 97-residue polypeptide: Large ribosomal subunit protein uL23 (97 aa).

This sequence belongs to the universal ribosomal protein uL23 family. Part of the 50S ribosomal subunit. Contacts protein L29, and trigger factor when it is bound to the ribosome.

Its function is as follows. One of the early assembly proteins it binds 23S rRNA. One of the proteins that surrounds the polypeptide exit tunnel on the outside of the ribosome. Forms the main docking site for trigger factor binding to the ribosome. This is Large ribosomal subunit protein uL23 from Brachyspira hyodysenteriae (strain ATCC 49526 / WA1).